The primary structure comprises 314 residues: 2,3-dihydroxyphenylpropionate/2,3-dihydroxicinnamic acid 1,2-dioxygenase (314 aa).

Catalysis depends on His115, which acts as the Proton donor. His179 functions as the Proton acceptor in the catalytic mechanism.

Belongs to the LigB/MhpB extradiol dioxygenase family. In terms of assembly, homotetramer. Fe(2+) serves as cofactor.

It carries out the reaction 3-(2,3-dihydroxyphenyl)propanoate + O2 = (2Z,4E)-2-hydroxy-6-oxonona-2,4-dienedioate + H(+). The enzyme catalyses (2E)-3-(2,3-dihydroxyphenyl)prop-2-enoate + O2 = (2Z,4E,7E)-2-hydroxy-6-oxonona-2,4,7-trienedioate + H(+). It functions in the pathway aromatic compound metabolism; 3-phenylpropanoate degradation. Functionally, catalyzes the non-heme iron(II)-dependent oxidative cleavage of 2,3-dihydroxyphenylpropionic acid and 2,3-dihydroxicinnamic acid into 2-hydroxy-6-ketononadienedioate and 2-hydroxy-6-ketononatrienedioate, respectively. This chain is 2,3-dihydroxyphenylpropionate/2,3-dihydroxicinnamic acid 1,2-dioxygenase, found in Escherichia coli O81 (strain ED1a).